We begin with the raw amino-acid sequence, 1073 residues long: Transmembrane protein 132E (1073 aa).

The first 33 residues, 1 to 33 (MGHFVVQGDLPWILCSLRLVIMIIAGKVSPTSS), serve as a signal peptide directing secretion. Over 34 to 899 (DALFSVPVPS…MTDLEIGMYA (866 aa)) the chain is Extracellular. N-linked (GlcNAc...) asparagine glycosylation is present at Asn102. The interval 246-270 (DPDSNDECGESYPRRGGPSRGESLS) is disordered. N-linked (GlcNAc...) asparagine glycans are attached at residues Asn324, Asn396, and Asn746. The helical transmembrane segment at 900–920 (LLGVFCLAILVFLINCIVFVL) threads the bilayer. Over 921-1073 (KYRHKRIPPE…DYMRRIKEIA (153 aa)) the chain is Cytoplasmic. The segment covering 952–970 (TQSDLSPQTVESPSNTLEG) has biased composition (polar residues). Residues 952 to 1024 (TQSDLSPQTV…PTSKRKRVKF (73 aa)) are disordered. Residues 982-994 (SGSSQTSVQSQVH) are compositionally biased toward low complexity.

This sequence belongs to the TMEM132 family.

The protein localises to the membrane. In terms of biological role, required for normal inner ear hair cell function and hearing. The sequence is that of Transmembrane protein 132E (tmem132e) from Danio rerio (Zebrafish).